A 437-amino-acid polypeptide reads, in one-letter code: GTPase Obg (437 aa).

Positions 2-160 constitute an Obg domain; the sequence is SMFLDTAKIS…RELQLELKIL (159 aa). An OBG-type G domain is found at 161-338; the sequence is ADVGLVGFPS…LMDATAELLA (178 aa). GTP is bound by residues 167–174, 192–196, 214–217, 284–287, and 319–321; these read GFPSVGKS, FTTIV, DLPG, NKMD, and SSL. Residues serine 174 and threonine 194 each contribute to the Mg(2+) site. Positions 359–437 constitute an OCT domain; that stretch reads GFNEDERPFE…IGNFEFEFVD (79 aa).

It belongs to the TRAFAC class OBG-HflX-like GTPase superfamily. OBG GTPase family. Monomer. It depends on Mg(2+) as a cofactor.

It localises to the cytoplasm. Its function is as follows. An essential GTPase which binds GTP, GDP and possibly (p)ppGpp with moderate affinity, with high nucleotide exchange rates and a fairly low GTP hydrolysis rate. Plays a role in control of the cell cycle, stress response, ribosome biogenesis and in those bacteria that undergo differentiation, in morphogenesis control. This Streptococcus agalactiae serotype Ia (strain ATCC 27591 / A909 / CDC SS700) protein is GTPase Obg.